The following is a 173-amino-acid chain: Crossover junction endodeoxyribonuclease RuvC (173 aa).

Catalysis depends on residues Asp8, Glu67, and Asp139. Mg(2+)-binding residues include Asp8, Glu67, and Asp139.

This sequence belongs to the RuvC family. As to quaternary structure, homodimer which binds Holliday junction (HJ) DNA. The HJ becomes 2-fold symmetrical on binding to RuvC with unstacked arms; it has a different conformation from HJ DNA in complex with RuvA. In the full resolvosome a probable DNA-RuvA(4)-RuvB(12)-RuvC(2) complex forms which resolves the HJ. Mg(2+) is required as a cofactor.

It localises to the cytoplasm. It carries out the reaction Endonucleolytic cleavage at a junction such as a reciprocal single-stranded crossover between two homologous DNA duplexes (Holliday junction).. The RuvA-RuvB-RuvC complex processes Holliday junction (HJ) DNA during genetic recombination and DNA repair. Endonuclease that resolves HJ intermediates. Cleaves cruciform DNA by making single-stranded nicks across the HJ at symmetrical positions within the homologous arms, yielding a 5'-phosphate and a 3'-hydroxyl group; requires a central core of homology in the junction. The consensus cleavage sequence is 5'-(A/T)TT(C/G)-3'. Cleavage occurs on the 3'-side of the TT dinucleotide at the point of strand exchange. HJ branch migration catalyzed by RuvA-RuvB allows RuvC to scan DNA until it finds its consensus sequence, where it cleaves and resolves the cruciform DNA. In Sodalis glossinidius (strain morsitans), this protein is Crossover junction endodeoxyribonuclease RuvC.